Here is a 66-residue protein sequence, read N- to C-terminus: Large ribosomal subunit protein uL29 (66 aa).

This sequence belongs to the universal ribosomal protein uL29 family.

This chain is Large ribosomal subunit protein uL29, found in Sinorhizobium fredii (strain NBRC 101917 / NGR234).